A 428-amino-acid chain; its full sequence is Histidinol dehydrogenase (428 aa).

Residues serine 234, glutamine 256, and histidine 259 each coordinate substrate. The Zn(2+) site is built by glutamine 256 and histidine 259. Catalysis depends on proton acceptor residues glutamate 324 and histidine 325. Substrate-binding residues include histidine 325, aspartate 358, glutamate 412, and histidine 417. Aspartate 358 contributes to the Zn(2+) binding site. Histidine 417 lines the Zn(2+) pocket.

The protein belongs to the histidinol dehydrogenase family. It depends on Zn(2+) as a cofactor.

It carries out the reaction L-histidinol + 2 NAD(+) + H2O = L-histidine + 2 NADH + 3 H(+). It functions in the pathway amino-acid biosynthesis; L-histidine biosynthesis; L-histidine from 5-phospho-alpha-D-ribose 1-diphosphate: step 9/9. In terms of biological role, catalyzes the sequential NAD-dependent oxidations of L-histidinol to L-histidinaldehyde and then to L-histidine. The protein is Histidinol dehydrogenase of Pelagibacter ubique (strain HTCC1062).